Reading from the N-terminus, the 74-residue chain is Putative membrane protein insertion efficiency factor (74 aa).

This sequence belongs to the UPF0161 family.

The protein resides in the cell membrane. Could be involved in insertion of integral membrane proteins into the membrane. This chain is Putative membrane protein insertion efficiency factor, found in Bacillus pumilus (strain SAFR-032).